The sequence spans 93 residues: MATTVAPSSSLWTPSWKTSAFGIILLICLCLIIYGIYKVIRICIIPAAMTATPAGELLVHINYYKKAKIYYNQINFYVLLSGLKMCLFEVAKK.

This is an uncharacterized protein from Saimiriine herpesvirus 2 (strain 11) (SaHV-2).